We begin with the raw amino-acid sequence, 538 residues long: Chaperonin GroEL (538 aa).

Residues Thr-29 to Pro-32, Asp-86 to Thr-90, Gly-413, Asp-479 to Leu-481, and Asp-495 each bind ATP.

Belongs to the chaperonin (HSP60) family. As to quaternary structure, forms a cylinder of 14 subunits composed of two heptameric rings stacked back-to-back. Interacts with the co-chaperonin GroES.

Its subcellular location is the cytoplasm. It catalyses the reaction ATP + H2O + a folded polypeptide = ADP + phosphate + an unfolded polypeptide.. Functionally, together with its co-chaperonin GroES, plays an essential role in assisting protein folding. The GroEL-GroES system forms a nano-cage that allows encapsulation of the non-native substrate proteins and provides a physical environment optimized to promote and accelerate protein folding. This is Chaperonin GroEL from Fervidobacterium nodosum (strain ATCC 35602 / DSM 5306 / Rt17-B1).